The primary structure comprises 225 residues: Thymidylate kinase (225 aa).

9–16 (GIEGCGKT) contacts ATP.

Belongs to the thymidylate kinase family.

It catalyses the reaction dTMP + ATP = dTDP + ADP. Its function is as follows. Phosphorylation of dTMP to form dTDP in both de novo and salvage pathways of dTTP synthesis. This is Thymidylate kinase from Citrifermentans bemidjiense (strain ATCC BAA-1014 / DSM 16622 / JCM 12645 / Bem) (Geobacter bemidjiensis).